The chain runs to 2133 residues: MQLELSTCVFLCLLPLGFSAIRRYYLGAVELSWDYRQSELLRELHVDTRFPATAPGALPLGPSVLYKKTVFVEFTDQLFSVARPRPPWMGLLGPTIQAEVYDTVVVTLKNMASHPVSLHAVGVSFWKSSEGAEYEDHTSQREKEDDKVLPGKSQTYVWQVLKENGPTASDPPCLTYSYLSHVDLVKDLNSGLIGALLVCREGSLTRERTQNLHEFVLLFAVFDEGKSWHSARNDSWTRAMDPAPARAQPAMHTVNGYVNRSLPGLIGCHKKSVYWHVIGMGTSPEVHSIFLEGHTFLVRHHRQASLEISPLTFLTAQTFLMDLGQFLLFCHISSHHHGGMEAHVRVESCAEEPQLRRKADEEEDYDDNLYDSDMDVVRLDGDDVSPFIQIRSVAKKHPKTWVHYISAEEEDWDYAPAVPSPSDRSYKSLYLNSGPQRIGRKYKKARFVAYTDVTFKTRKAIPYESGILGPLLYGEVGDTLLIIFKNKASRPYNIYPHGITDVSALHPGRLLKGWKHLKDMPILPGETFKYKWTVTVEDGPTKSDPRCLTRYYSSSINLEKDLASGLIGPLLICYKESVDQRGNQMMSDKRNVILFSVFDENQSWYLAENIQRFLPNPDGLQPQDPEFQASNIMHSINGYVFDSLQLSVCLHEVAYWYILSVGAQTDFLSVFFSGYTFKHKMVYEDTLTLFPFSGETVFMSMENPGLWVLGCHNSDLRNRGMTALLKVYSCDRDIGDYYDNTYEDIPGFLLSGKNVIEPRSFAQNSRPPSASQKQFQTITSPEDDVELDPQSGERTQALEELSVPSGDGSMLLGQNPAPHGSSSSDLQEARNEADDYLPGARERNTAPSAAARLRPELHHSAERVLTPEPEKELKKLDSKMSSSSDLLKTSPTIPSDTLSAETERTHSLGPPHPQVNFRSQLGAIVLGKNSSHFIGAGVPLGSTEEDHESSLGENVSPVESDGIFEKERAHGPASLTKDDVLFKVNISLVKTNKARVYLKTNRKIHIDDAALLTENRASATFMDKNTTASGLNHVSNWIKGPLGKNPLSSERGPSPELLTSSGSGKSVKGQSSGQGRIRVAVEEEELSKGKEMMLPNSELTFLTNSADVQGNDTHSQGKKSREEMERREKLVQEKVDLPQVYTATGTKNFLRNIFHQSTEPSVEGFDGGSHAPVPQDSRSLNDSAERAETHIAHFSAIREEAPLEAPGNRTGPGPRSAVPRRVKQSLKQIRLPLEEIKPERGVVLNATSTRWSESSPILQGAKRNNLSLPFLTLEMAGGQGKISALGKSAAGPLASGKLEKAVLSSAGLSEASGKAEFLPKVRVHREDLLPQKTSNVSCAHGDLGQEIFLQKTRGPVNLNKVNRPGRTPSKLLGPPMPKEWESLEKSPKSTALRTKDIISLPLDRHESNHSIAAKNEGQAETQREAAWTKQGGPGRLCAPKPPVLRRHQRDISLPTFQPEEDKMDYDDIFSTETKGEDFDIYGEDENQDPRSFQKRTRHYFIAAVEQLWDYGMSESPRALRNRAQNGEVPRFKKVVFREFADGSFTQPSYRGELNKHLGLLGPYIRAEVEDNIMVTFKNQASRPYSFYSSLISYPDDQEQGAEPRHNFVQPNETRTYFWKVQHHMAPTEDEFDCKAWAYFSDVDLEKDVHSGLIGPLLICRANTLNAAHGRQVTVQEFALFFTIFDETKSWYFTENVERNCRAPCHLQMEDPTLKENYRFHAINGYVMDTLPGLVMAQNQRIRWYLLSMGSNENIHSIHFSGHVFSVRKKEEYKMAVYNLYPGVFETVEMLPSKVGIWRIECLIGEHLQAGMSTTFLVYSKECQAPLGMASGRIRDFQITASGQYGQWAPKLARLHYSGSINAWSTKDPHSWIKVDLLAPMIIHGIMTQGARQKFSSLYISQFIIMYSLDGRNWQSYRGNSTGTLMVFFGNVDASGIKHNIFNPPIVARYIRLHPTHYSIRSTLRMELMGCDLNSCSMPLGMQNKAISDSQITASSHLSNIFATWSPSQARLHLQGRTNAWRPRVSSAEEWLQVDLQKTVKVTGITTQGVKSLLSSMYVKEFLVSSSQDGRRWTLFLQDGHTKVFQGNQDSSTPVVNALDPPLFTRYLRIHPTSWAQHIALRLEVLGCEAQDLY.

The first 19 residues, 1-19, serve as a signal peptide directing secretion; the sequence is MQLELSTCVFLCLLPLGFS. Plastocyanin-like domains lie at 20 to 199, 207 to 357, 399 to 573, and 583 to 730; these read AIRR…LLVC, ERTQ…QLRR, KTWV…LLIC, and NQMM…VYSC. F5/8 type A domains follow at residues 20–357 and 399–730; these read AIRR…QLRR and KTWV…VYSC. A disulfide bridge connects residues C173 and C199. N-linked (GlcNAc...) asparagine glycans are attached at residues N233 and N259. A disulfide bridge connects residues C547 and C573. N601 carries N-linked (GlcNAc...) asparagine glycosylation. Residues Y737, Y738, and Y742 each carry the sulfotyrosine modification. 2 disordered regions span residues 760–790 and 804–914; these read SFAQNSRPPSASQKQFQTITSPEDDVELDPQ and PSGD…PHPQ. The b stretch occupies residues 760-1599; sequence SFAQNSRPPS…LISYPDDQEQ (840 aa). Over residues 761–780 the composition is skewed to polar residues; it reads FAQNSRPPSASQKQFQTITS. 2 stretches are compositionally biased toward basic and acidic residues: residues 853–862 and 868–878; these read LRPELHHSAE and EPEKELKKLDS. A compositionally biased stretch (low complexity) spans 879–888; it reads KMSSSSDLLK. Residues 889–900 show a composition bias toward polar residues; sequence TSPTIPSDTLSA. N-linked (GlcNAc...) asparagine glycosylation is found at N929, N985, and N1025. Residues 1042–1078 form a disordered region; sequence LGKNPLSSERGPSPELLTSSGSGKSVKGQSSGQGRIR. A compositionally biased stretch (low complexity) spans 1060–1075; sequence SSGSGKSVKGQSSGQG. N1111 carries N-linked (GlcNAc...) asparagine glycosylation. The tract at residues 1160–1179 is disordered; the sequence is PSVEGFDGGSHAPVPQDSRS. N-linked (GlcNAc...) asparagine glycans are attached at residues N1181, N1208, N1245, N1265, and N1335. A disordered region spans residues 1200–1221; the sequence is EAPLEAPGNRTGPGPRSAVPRR. Disordered regions lie at residues 1358 to 1391 and 1406 to 1441; these read LNKVNRPGRTPSKLLGPPMPKEWESLEKSPKSTA and ESNHSIAAKNEGQAETQREAAWTKQGGPGRLCAPKP. Residues 1378–1387 are compositionally biased toward basic and acidic residues; sequence KEWESLEKSP. N-linked (GlcNAc...) asparagine glycans are attached at residues N1408 and N1611. 2 consecutive Plastocyanin-like domains span residues 1495–1659 and 1669–1822; these read RTRH…LLIC and GRQV…SKEC. The 328-residue stretch at 1495–1822 folds into the F5/8 type A 3 domain; the sequence is RTRHYFIAAV…TTFLVYSKEC (328 aa). 3 cysteine pairs are disulfide-bonded: C1633-C1659, C1822-C1970, and C1975-C2127. F5/8 type C domains are found at residues 1822–1970 and 1975–2127; these read CQAP…LMGC and CSMP…VLGC. N1919 is a glycosylation site (N-linked (GlcNAc...) asparagine).

It belongs to the multicopper oxidase family. As to quaternary structure, interacts with vWF. vWF binding is essential for the stabilization of F8 in circulation. Proteolytically cleaved by cathepsin CTSG to produce a partially activated form.

It localises to the secreted. The protein localises to the extracellular space. Factor VIII, along with calcium and phospholipid, acts as a cofactor for factor IXa when it converts factor X to the activated form, factor Xa. This chain is Coagulation factor VIII (F8), found in Sus scrofa (Pig).